Consider the following 984-residue polypeptide: E3 ubiquitin-protein ligase BRE1A (984 aa).

The disordered stretch occupies residues Met1–Thr34. A coiled-coil region spans residues Thr43–Leu90. The interval Val128–Glu150 is disordered. Residues Asn139–Glu150 are compositionally biased toward basic and acidic residues. Coiled coils occupy residues Ala236 to Thr378 and Ser429 to Lys907. The disordered stretch occupies residues Ser506–Ala632. Residues Arg514–Thr526 show a composition bias toward polar residues. Composition is skewed to basic and acidic residues over residues Glu527–Pro540 and Ser558–Ala632. The segment at Cys931 to Asn970 adopts an RING-type zinc-finger fold.

Belongs to the BRE1 family. As to quaternary structure, component of the RNF20/40 complex (also known as BRE1 complex).

It is found in the nucleus. The catalysed reaction is S-ubiquitinyl-[E2 ubiquitin-conjugating enzyme]-L-cysteine + [acceptor protein]-L-lysine = [E2 ubiquitin-conjugating enzyme]-L-cysteine + N(6)-ubiquitinyl-[acceptor protein]-L-lysine.. It participates in protein modification; protein ubiquitination. Its function is as follows. Component of the RNF20/40 E3 ubiquitin-protein ligase complex that mediates monoubiquitination of 'Lys-120' of histone H2B (H2BK120ub1). H2BK120ub1 gives a specific tag for epigenetic transcriptional activation and is also prerequisite for histone H3 'Lys-4' and 'Lys-79' methylation (H3K4me and H3K79me, respectively). This chain is E3 ubiquitin-protein ligase BRE1A (RNF20), found in Gallus gallus (Chicken).